We begin with the raw amino-acid sequence, 453 residues long: Chromosomal replication initiator protein DnaA (453 aa).

The tract at residues 1-73 is domain I, interacts with DnaA modulators; that stretch reads MELSPQDLWT…ADVVEEILGY (73 aa). The segment at 73 to 110 is domain II; sequence YSIDIQLTSTQGENIAIVGETQVSAYYPTLSGEHPKPI. The domain III, AAA+ region stretch occupies residues 111–327; the sequence is KLNPKYTFSR…GALIRAITYI (217 aa). ATP is bound by residues glycine 155, glycine 157, lysine 158, and threonine 159. Positions 328 to 453 are domain IV, binds dsDNA; sequence SISGLSMTVE…HLASRTQKTT (126 aa).

Belongs to the DnaA family. In terms of assembly, oligomerizes as a right-handed, spiral filament on DNA at oriC.

It localises to the cytoplasm. Plays an essential role in the initiation and regulation of chromosomal replication. ATP-DnaA binds to the origin of replication (oriC) to initiate formation of the DNA replication initiation complex once per cell cycle. Binds the DnaA box (a 9 base pair repeat at the origin) and separates the double-stranded (ds)DNA. Forms a right-handed helical filament on oriC DNA; dsDNA binds to the exterior of the filament while single-stranded (ss)DNA is stabiized in the filament's interior. The ATP-DnaA-oriC complex binds and stabilizes one strand of the AT-rich DNA unwinding element (DUE), permitting loading of DNA polymerase. After initiation quickly degrades to an ADP-DnaA complex that is not apt for DNA replication. Binds acidic phospholipids. The protein is Chromosomal replication initiator protein DnaA of Gloeothece citriformis (strain PCC 7424) (Cyanothece sp. (strain PCC 7424)).